Here is a 640-residue protein sequence, read N- to C-terminus: Large subunit GTPase 1 homolog (640 aa).

In terms of domain architecture, CP-type G spans 165 to 426 (WRQLWRVIER…LCDCPGLVMP (262 aa)). GTP is bound at residue 213–216 (NKAD). The segment at 251–341 (AEERGEDAMD…ESTATSSFYN (91 aa)) is disordered. 3 stretches are compositionally biased toward acidic residues: residues 253–270 (ERGEDAMDQEDQSDTEEE), 290–304 (EKDENEQDEEEEGED), and 320–331 (ESGDEDHAEENP). Polar residues predominate over residues 332–341 (ESTATSSFYN). GTP contacts are provided by residues 375–382 (GYPNVGKS) and 419–422 (DCPG). The interval 602-640 (GPVEAGKANTEQQAGKPWKKHGNRNKKEKVRRLNKHLDA) is disordered. A compositionally biased stretch (basic residues) spans 618–640 (PWKKHGNRNKKEKVRRLNKHLDA).

This sequence belongs to the TRAFAC class YlqF/YawG GTPase family. LSG1 subfamily.

The protein resides in the cytoplasm. It is found in the endoplasmic reticulum. It localises to the nucleus. Its subcellular location is the cajal body. It carries out the reaction GTP + H2O = GDP + phosphate + H(+). Functionally, functions as a GTPase. May act by mediating the release of NMD3 from the 60S ribosomal subunit after export into the cytoplasm during the 60S ribosomal subunit maturation. In Danio rerio (Zebrafish), this protein is Large subunit GTPase 1 homolog.